Consider the following 470-residue polypeptide: Metalloreductase STEAP4 (470 aa).

Residues Thr-27–Phe-30, Ser-49–Arg-50, Tyr-67, Met-81–His-85, Asn-106, and Ala-139 contribute to the NADP(+) site. Positions 140 and 148 each coordinate FAD. Position 171 (Arg-171) interacts with NADP(+). 2 consecutive transmembrane segments (helical) span residues Phe-202–Ile-224 and Tyr-236–Ala-256. Residue Tyr-217 coordinates Fe(3+). A Ferric oxidoreductase domain is found at Phe-247–Thr-395. FAD-binding residues include Gln-269 and Arg-290. Transmembrane regions (helical) follow at residues Leu-293 to Ile-313 and Ala-342 to Leu-362. His-304 contributes to the heme b binding site. Tyr-307 contacts Fe(3+). Residues Ser-366 and Gln-383 each coordinate FAD. The next 2 membrane-spanning stretches (helical) occupy residues Phe-381–Tyr-401 and Ala-419–Met-439. His-397 lines the heme b pocket.

Belongs to the STEAP family. In terms of assembly, homotrimer. Interacts with PTK2/FAK1; the interaction may regulate PTK2 phosphorylation. Requires FAD as cofactor. The cofactor is heme b. Expressed in white and brown adipose tissues cells, as well as in muscle and liver cells. Detected in joints and spleens of arthritic mice.

The protein resides in the cell membrane. It localises to the golgi apparatus membrane. Its subcellular location is the early endosome membrane. It carries out the reaction 2 Fe(2+) + NADP(+) + H(+) = 2 Fe(3+) + NADPH. It catalyses the reaction 2 Cu(+) + NADP(+) + H(+) = 2 Cu(2+) + NADPH. Its function is as follows. Integral membrane protein that functions as a NADPH-dependent ferric-chelate reductase, using NADPH from one side of the membrane to reduce a Fe(3+) chelate that is bound on the other side of the membrane. Mediates sequential transmembrane electron transfer from NADPH to FAD and onto heme, and finally to the Fe(3+) chelate. Can also reduce Cu(2+) to Cu(1+). Plays a role in systemic metabolic homeostasis, integrating inflammatory and metabolic responses. Associated with obesity and insulin-resistance. Involved in inflammatory arthritis, through the regulation of inflammatory cytokines. Inhibits anchorage-independent cell proliferation. In Mus musculus (Mouse), this protein is Metalloreductase STEAP4 (Steap4).